A 103-amino-acid polypeptide reads, in one-letter code: ATP synthase subunit c (103 aa).

Helical transmembrane passes span 3–23 (FLAL…VSGL), 30–50 (SIAG…IGMG), and 74–94 (MFIA…LALI).

Belongs to the ATPase C chain family. F-type ATPases have 2 components, F(1) - the catalytic core - and F(0) - the membrane proton channel. F(1) has five subunits: alpha(3), beta(3), gamma(1), delta(1), epsilon(1). F(0) has three main subunits: a(1), b(2) and c(10-14). The alpha and beta chains form an alternating ring which encloses part of the gamma chain. F(1) is attached to F(0) by a central stalk formed by the gamma and epsilon chains, while a peripheral stalk is formed by the delta and b chains.

Its subcellular location is the cell inner membrane. F(1)F(0) ATP synthase produces ATP from ADP in the presence of a proton or sodium gradient. F-type ATPases consist of two structural domains, F(1) containing the extramembraneous catalytic core and F(0) containing the membrane proton channel, linked together by a central stalk and a peripheral stalk. During catalysis, ATP synthesis in the catalytic domain of F(1) is coupled via a rotary mechanism of the central stalk subunits to proton translocation. Its function is as follows. Key component of the F(0) channel; it plays a direct role in translocation across the membrane. A homomeric c-ring of between 10-14 subunits forms the central stalk rotor element with the F(1) delta and epsilon subunits. The chain is ATP synthase subunit c from Helicobacter hepaticus (strain ATCC 51449 / 3B1).